Reading from the N-terminus, the 358-residue chain is Chorismate synthase (358 aa).

Arg48 serves as a coordination point for NADP(+). Residues 125-127, Ser277, 292-296, and Arg318 contribute to the FMN site; these read RAS and KPIPS.

The protein belongs to the chorismate synthase family. Homotetramer. It depends on FMNH2 as a cofactor.

The enzyme catalyses 5-O-(1-carboxyvinyl)-3-phosphoshikimate = chorismate + phosphate. It functions in the pathway metabolic intermediate biosynthesis; chorismate biosynthesis; chorismate from D-erythrose 4-phosphate and phosphoenolpyruvate: step 7/7. Its function is as follows. Catalyzes the anti-1,4-elimination of the C-3 phosphate and the C-6 proR hydrogen from 5-enolpyruvylshikimate-3-phosphate (EPSP) to yield chorismate, which is the branch point compound that serves as the starting substrate for the three terminal pathways of aromatic amino acid biosynthesis. This reaction introduces a second double bond into the aromatic ring system. The chain is Chorismate synthase from Desulfatibacillum aliphaticivorans.